The primary structure comprises 387 residues: Eukaryotic translation initiation factor 3 subunit M (387 aa).

Residues L181–H340 form the PCI domain.

The protein belongs to the eIF-3 subunit M family. In terms of assembly, component of the eukaryotic translation initiation factor 3 (eIF-3) complex. The eIF-3 complex interacts with pix.

It localises to the cytoplasm. Its subcellular location is the golgi apparatus. In terms of biological role, component of the eukaryotic translation initiation factor 3 (eIF-3) complex, which is involved in protein synthesis of a specialized repertoire of mRNAs and, together with other initiation factors, stimulates binding of mRNA and methionyl-tRNAi to the 40S ribosome. The eIF-3 complex specifically targets and initiates translation of a subset of mRNAs involved in cell proliferation. In Drosophila mojavensis (Fruit fly), this protein is Eukaryotic translation initiation factor 3 subunit M.